A 365-amino-acid chain; its full sequence is Cyclin-D5-2 (365 aa).

Belongs to the cyclin family. Cyclin D subfamily.

The polypeptide is Cyclin-D5-2 (CYCD5-2) (Oryza sativa subsp. japonica (Rice)).